The sequence spans 207 residues: Small ribosomal subunit protein uS4c (207 aa).

The S4 RNA-binding domain occupies 92-156 (MRLDNILFRL…YQSIITKRIE (65 aa)).

It belongs to the universal ribosomal protein uS4 family. Part of the 30S ribosomal subunit. Contacts protein S5. The interaction surface between S4 and S5 is involved in control of translational fidelity.

The protein resides in the plastid. Its subcellular location is the chloroplast. One of the primary rRNA binding proteins, it binds directly to 16S rRNA where it nucleates assembly of the body of the 30S subunit. Its function is as follows. With S5 and S12 plays an important role in translational accuracy. The polypeptide is Small ribosomal subunit protein uS4c (rps4) (Equisetum palustre (Marsh horsetail)).